The primary structure comprises 577 residues: Serine/threonine-protein kinase AGC1-5 (577 aa).

Over residues 1-12 (MDLASKKNTANV) the composition is skewed to polar residues. Positions 1 to 151 (MDLASKKNTA…DYAYGDNLVG (151 aa)) are disordered. Residues 44-55 (PHFDPKKMDPLV) are compositionally biased toward basic and acidic residues. 2 stretches are compositionally biased toward polar residues: residues 69 to 87 (TRGTNSEGDLKHNTYSSDG) and 110 to 120 (LTTSETYSPSA). In terms of domain architecture, Protein kinase spans 185–509 (FRLLKRLGYG…ATEIKQHPFF (325 aa)). Residues 191–199 (LGYGDIGSV) and K214 contribute to the ATP site. D310 acts as the Proton acceptor in catalysis. Positions 510-577 (EGVNWALVRS…DTAYIDFEYF (68 aa)) constitute an AGC-kinase C-terminal domain.

The protein belongs to the protein kinase superfamily. AGC Ser/Thr protein kinase family. As to quaternary structure, interacts with PDPK1/PDK1. Autophosphorylated and phosphorylated by PDPK1/PDK1. As to expression, specifically expressed in pollen grains.

It carries out the reaction L-seryl-[protein] + ATP = O-phospho-L-seryl-[protein] + ADP + H(+). It catalyses the reaction L-threonyl-[protein] + ATP = O-phospho-L-threonyl-[protein] + ADP + H(+). Its activity is regulated as follows. Activated by PDPK1/PDK1. Its function is as follows. Functions redudantly with AGC1-7 as signaling component in the pollen tube. Required for polarized growth of pollen tubes. The protein is Serine/threonine-protein kinase AGC1-5 of Arabidopsis thaliana (Mouse-ear cress).